Here is a 386-residue protein sequence, read N- to C-terminus: Putative nickel insertion protein (386 aa).

Belongs to the LarC family.

The sequence is that of Putative nickel insertion protein from Dictyoglomus thermophilum (strain ATCC 35947 / DSM 3960 / H-6-12).